The chain runs to 107 residues: Quaternary ammonium compound-resistance protein QacC (107 aa).

Helical transmembrane passes span 26-46 (FSKFIPSLGTIISFGICFYFL), 57-77 (ITYATWAGLGLVLTTVVSIII), and 84-104 (LITIVSIVLIIVGVVSLNIFG).

Belongs to the drug/metabolite transporter (DMT) superfamily. Small multidrug resistance (SMR) (TC 2.A.7.1) family.

It localises to the cell membrane. Multidrug exporter. Is implicated for the resistance to bacteriocidal quaternary ammonium compounds. This is Quaternary ammonium compound-resistance protein QacC from Staphylococcus sp. (strain ST827).